The sequence spans 397 residues: Cathepsin E-A (397 aa).

An N-terminal signal peptide occupies residues 1–16; the sequence is MRQILVLLLFATLVYG. The propeptide at 17–52 is activation peptide; the sequence is LIRVPLKRQKSIRKTLKEKGKLSHIWTQQGIDMVQY. The 312-residue stretch at 74–385 folds into the Peptidase A1 domain; it reads YFGEISVGTP…DRGNNRVGLA (312 aa). Asn86 carries an N-linked (GlcNAc...) asparagine glycan. Asp92 is an active-site residue. Cys105 and Cys110 are joined by a disulfide. The N-linked (GlcNAc...) asparagine glycan is linked to Asn130. Cys268 and Cys272 are joined by a disulfide. Residue Asp277 is part of the active site. Cys310 and Cys344 are oxidised to a cystine.

The protein belongs to the peptidase A1 family. Homodimer; disulfide-linked. In terms of processing, glycosylated. Contains high mannose-type oligosaccharide. As to expression, expressed predominantly in the larval foregut and the anterior and posterior adult stomach.

The protein resides in the endosome. It carries out the reaction Similar to cathepsin D, but slightly broader specificity.. In terms of biological role, may have a role in immune function. Probably involved in the processing of antigenic peptides during MHC class II-mediated antigen presentation. The chain is Cathepsin E-A (ctse-a) from Xenopus laevis (African clawed frog).